A 130-amino-acid chain; its full sequence is Follitropin subunit beta (130 aa).

Positions 1 to 20 (MMKSIQLCILLWCLRAVCCH) are cleaved as a signal peptide. Cystine bridges form between C22-C70, C36-C85, C39-C123, C47-C101, C51-C103, and C106-C113. N-linked (GlcNAc...) asparagine glycosylation is found at N26 and N43.

The protein belongs to the glycoprotein hormones subunit beta family. Heterodimer. The active follitropin is a heterodimer composed of an alpha chain/CGA shared with other hormones and a unique beta chain/FSHB shown here.

Its subcellular location is the secreted. In terms of biological role, together with the alpha chain CGA constitutes follitropin, the follicle-stimulating hormone, and provides its biological specificity to the hormone heterodimer. Binds FSHR, a G protein-coupled receptor, on target cells to activate downstream signaling pathways. Follitropin is involved in follicle development and spermatogenesis in reproductive organs. The chain is Follitropin subunit beta (Fshb) from Rattus norvegicus (Rat).